A 51-amino-acid chain; its full sequence is Large ribosomal subunit protein eL39z (51 aa).

Belongs to the eukaryotic ribosomal protein eL39 family.

The polypeptide is Large ribosomal subunit protein eL39z (RPL39A) (Oryza sativa subsp. japonica (Rice)).